Here is a 36-residue protein sequence, read N- to C-terminus: Kappa-theraphotoxin-Pg1b (36 aa).

3 cysteine pairs are disulfide-bonded: C4–C19, C11–C24, and C18–C31.

The protein belongs to the neurotoxin 10 (Hwtx-1) family. 44 (Jztx-4) subfamily. As to expression, expressed by the venom gland.

It localises to the secreted. In terms of biological role, gating modifier of Kv2.1/KCNB1, Kv2.2/KCNB2 and Kv4.3/KCND3 channels. This is Kappa-theraphotoxin-Pg1b from Chilobrachys guangxiensis (Chinese earth tiger tarantula).